The primary structure comprises 188 residues: GMP synthase [glutamine-hydrolyzing] subunit A (188 aa).

One can recognise a Glutamine amidotransferase type-1 domain in the interval methionine 1–glutamate 188. Cysteine 76 serves as the catalytic Nucleophile. Residues histidine 163 and glutamate 165 contribute to the active site.

Heterodimer composed of a glutamine amidotransferase subunit (A) and a GMP-binding subunit (B).

It carries out the reaction XMP + L-glutamine + ATP + H2O = GMP + L-glutamate + AMP + diphosphate + 2 H(+). It functions in the pathway purine metabolism; GMP biosynthesis; GMP from XMP (L-Gln route): step 1/1. In terms of biological role, catalyzes the synthesis of GMP from XMP. In Methanococcus aeolicus (strain ATCC BAA-1280 / DSM 17508 / OCM 812 / Nankai-3), this protein is GMP synthase [glutamine-hydrolyzing] subunit A.